We begin with the raw amino-acid sequence, 172 residues long: Achaete-scute homolog 4 (172 aa).

In terms of domain architecture, bHLH spans 72 to 124; the sequence is AFLRKRNERERQRVRCVNEGYARLRDHLPRELADKRLSKVETLRAAIDYIKHL. Residues 144–172 are disordered; it reads QRRAECNSDGESKASSAPSPSSEPEEGGS. Positions 145-155 are enriched in basic and acidic residues; the sequence is RRAECNSDGES. Low complexity predominate over residues 156-165; that stretch reads KASSAPSPSS.

In terms of tissue distribution, expressed in skin. 7-fold higher expression in fetal skin than in adult skin. Weak expression also detected in fetal lung, aorta and brain, and in adult stomach, kidney, ovary and breast.

It localises to the nucleus. Its function is as follows. Could be a transcriptional regulator involved in skin development. This chain is Achaete-scute homolog 4 (ASCL4), found in Homo sapiens (Human).